The chain runs to 417 residues: Gamma-glutamyl phosphate reductase (417 aa).

This sequence belongs to the gamma-glutamyl phosphate reductase family.

It is found in the cytoplasm. It catalyses the reaction L-glutamate 5-semialdehyde + phosphate + NADP(+) = L-glutamyl 5-phosphate + NADPH + H(+). It participates in amino-acid biosynthesis; L-proline biosynthesis; L-glutamate 5-semialdehyde from L-glutamate: step 2/2. In terms of biological role, catalyzes the NADPH-dependent reduction of L-glutamate 5-phosphate into L-glutamate 5-semialdehyde and phosphate. The product spontaneously undergoes cyclization to form 1-pyrroline-5-carboxylate. In Escherichia coli O7:K1 (strain IAI39 / ExPEC), this protein is Gamma-glutamyl phosphate reductase.